A 117-amino-acid chain; its full sequence is Large ribosomal subunit protein bL20 (117 aa).

Belongs to the bacterial ribosomal protein bL20 family.

Functionally, binds directly to 23S ribosomal RNA and is necessary for the in vitro assembly process of the 50S ribosomal subunit. It is not involved in the protein synthesizing functions of that subunit. The chain is Large ribosomal subunit protein bL20 from Vibrio atlanticus (strain LGP32) (Vibrio splendidus (strain Mel32)).